Consider the following 1557-residue polypeptide: MKSTSFITLLLLSYFIVEAHSSIFHWDDERLFKHDDTHSWLTDVQKAELETLKHQPIQLRDKTLEFYNQLPTNEKAIWDKFYTKYCVVWLKEVASDEEIGKLKELESEKNKEALLTSIYSFKDRLDEVDQRKVELWKETCDEYVTKGLSRKRRDSNKNFEEFIYWMTDEQKQSMNDMKTAGKSFNEIHKEGRKYFKALTIDKQSSLKEQFKDKCKKYFMQIANSDEVEKIKSLNDDEIRHVVKNAVARLNGEDKEFAVKMETLCEDVLAFKARKNDIDDKINRRLSWMTDEQKQVVKQLYADGRSQADIRAKIFEFLSSIDGPAGVAAKAQIQKECYKWMEEVATAEEIAALHELHEIDHDGCRRKVREFIGRLPEDRKLEVEKDLPFCEKIWYRDHGDHNSHKHGAHHHHRHLAVRRRRHLYAIEKFLDWLKPEQKHELEKIENSGAHFDDVIAEVKKFYGLLPEEKKIELKAKFKSQCYDWVKEVATSEEMNDIMKMHESKNHSDLMKRLTELENRLTEDQKHTIEHVREVCLGLWEVQNTNKQHKQSLEEAMDAYLSWMTDEDKEKVKAIYETSNRQTFYDEILKIMESSEDEVKAKATEKLEAACKHYGTNILGEENVDIIREMKKNGATFEEISNRVDELIEGITDSDRKEKAYRMSKLCKKIYSLGHSKQLQQYDFENVLQKYLTWLDDSQKNELRTMSDNKEKIYKKIIDYFDGTIGEVKEKAVEELQLACNHYIKSIVGEEKAMEIKQLKEEGKSSEEIAKKVEDVINQISDESIRSRADEALLVCKRIFGIVKRLRRDNSEIHSLEEAMERYLTWLSDDQKIVIKSIYDVNDRKVLYEKIMEFFDDAIGETKQKAAKELKDACKHYVKDLIGEENGNLLREMKENGASNEAIATKVEEMIEAITDETKRAQAMRASTSCRKVYGVVQRFRRDHHHEHNLDEALEKHFTWLNEEQKSQLKTIYESEDREALHKKVWEFFEAGAGLRASNASKKIYGVAKRFRRDHHHEHNLDEALEKYLTWLNEEQKSQMKTIYESGDREALYKKVLEFFEAATGEVKEKAAVELKSACRHYIKDYIGDEKAEKIKEMKESGVSTEEISKKVDEFIAMITDDEKKAKALRASSACKKIYGVAKRFRRDHHHEHNLEEALEKYLTWLNEEQKSQMKTIYESGDREALYKKVLEFFEAATGEVKEKAAVELKSACRHYIKDYIGDEKAEKIKEMKESGVSTEEISKKVDEFIAMITDDEKKAKALRASNACKKIYGVAKRLRRDHHHEHNLEEAMGKYLSWMSDEQQAQVKKIYGTGDRLATYNKVMELFESVPSDEKEKATSQLKAACRHYIKDFIGKDNLAVIKEMKESGATNEAIGEKIDEFIAGLDDEQKKAQAQRAASACKKIYGVKSRKRREHYEIDVDEAISKYLTWLNEEQKAEIKQLKEKDEKQTIGKKIMEFFELTSGDDKEKAREQLKAACKHYVKMYVGEEKAAELKKLKDSGISLEEMSKKVTETIETIEDEAVRAKARRIHSYCQRIFGITKARRHLAMKHHRFYDD.

A signal peptide spans 1 to 21; sequence MKSTSFITLLLLSYFIVEAHS. A propeptide spanning residues 22–60 is cleaved from the precursor; the sequence is SIFHWDDERLFKHDDTHSWLTDVQKAELETLKHQPIQLR. Asn997 carries N-linked (GlcNAc...) asparagine glycosylation.

The protein belongs to the NPA family. Post-translationally, nematode polyprotein allergens (NPAs) are synthesized as large polypeptides that are subsequently proteolytically cleaved to active polypeptide units.

In terms of biological role, has high binding affinity for fatty acids and retinoids. This chain is DVA-1 polyprotein (DVA-1), found in Dictyocaulus viviparus (Bovine lungworm).